The primary structure comprises 1199 residues: AP-3 complex subunit delta-1 (1199 aa).

Alanine 2 bears the N-acetylalanine mark. 9 HEAT repeats span residues 34 to 71 (KYIS…LGYD), 142 to 179 (DLAR…KYPE), 180 to 216 (SLRP…RNPK), 218 to 254 (YLSL…LEPR), 257 to 296 (KKLI…GMPN), 298 to 336 (SASI…THPK), 337 to 373 (SVQS…KKNL), 375 to 409 (EIVK…QSNY), and 521 to 558 (VYVQ…ERLP). Disordered regions lie at residues 623–695 (LDAW…RYQD) and 724–963 (YVKL…EPIP). A phosphoserine mark is found at serine 632, serine 634, and serine 636. 2 stretches are compositionally biased toward basic and acidic residues: residues 639-651 (EKPK…EEPR) and 665-675 (LARRREARKQE). The stretch at 659 to 679 (EEDEEELARRREARKQEQANN) forms a coiled coil. Serine 688 carries the post-translational modification Phosphoserine. Positions 722–750 (DQYVKLEEQRRHRQRLEKDKKRKKKEKGK) form a coiled coil. Residues 732 to 754 (RHRQRLEKDKKRKKKEKGKRRHS) show a composition bias toward basic residues. Residues serine 754 and serine 755 each carry the phosphoserine modification. At threonine 758 the chain carries Phosphothreonine. Residues serine 760, serine 784, and serine 825 each carry the phosphoserine modification. The segment covering 773–790 (ITEEMPENALPSDEDDKD) has biased composition (acidic residues). Residues 791–836 (PNDPYRALDIDLDKPLADSEKLPVQKHRNAEAVKSPEKEGVLGVEK) show a composition bias toward basic and acidic residues. The span at 837 to 846 (KSKKPKKKEK) shows a compositional bias: basic residues. A coiled-coil region spans residues 843-863 (KKEKKTKEREREKKDKKGEDL). Basic and acidic residues predominate over residues 847 to 862 (KTKEREREKKDKKGED). Residues 870–880 (TPPPAAAPIPA) are compositionally biased toward pro residues. Positions 894–916 (PKDECEVLKGEEEDHVDHDQERK) are enriched in basic and acidic residues. Residues 911 to 934 (HDQERKSSRHKKKKHRKEKEKEER) are a coiled coil. The span at 917-928 (SSRHKKKKHRKE) shows a compositional bias: basic residues.

This sequence belongs to the adaptor complexes large subunit family. As to quaternary structure, adaptor protein complex 3 (AP-3) is a heterotetramer composed of two large adaptins (delta-type subunit AP3D1 and beta-type subunit AP3B1 or AP3B2), a medium adaptin (mu-type subunit AP3M1 or AP3M2) and a small adaptin (sigma-type subunit APS1 or AP3S2). AP-3 associates with the BLOC-1 complex. Interacts with SLC30A2. Interacts with CLN3 (via dileucine motif); this interaction facilitates lysosomal targeting.

The protein localises to the cytoplasm. Its subcellular location is the golgi apparatus membrane. Functionally, part of the AP-3 complex, an adaptor-related complex which is not clathrin-associated. The complex is associated with the Golgi region as well as more peripheral structures. It facilitates the budding of vesicles from the Golgi membrane and may be directly involved in trafficking to lysosomes. Involved in process of CD8+ T-cell and NK cell degranulation. In concert with the BLOC-1 complex, AP-3 is required to target cargos into vesicles assembled at cell bodies for delivery into neurites and nerve terminals. This Mus musculus (Mouse) protein is AP-3 complex subunit delta-1 (Ap3d1).